The following is a 3707-amino-acid chain: CUB and sushi domain-containing protein 3 (3707 aa).

Over residues 1 to 21 (MKGSRKGESRAKESKPREPGT) the composition is skewed to basic and acidic residues. The tract at residues 1–22 (MKGSRKGESRAKESKPREPGTR) is disordered. At 1-42 (MKGSRKGESRAKESKPREPGTRRCAKCGRLDFILKKKMGIKS) the chain is on the cytoplasmic side. A helical membrane pass occupies residues 43–63 (GFTFWNLVFLLTLSCVKGFIY). Residues 64–3630 (TCGGTLKGLN…NQPHGTNSSS (3567 aa)) lie on the Extracellular side of the membrane. 4 cysteine pairs are disulfide-bonded: Cys65/Cys91, Cys178/Cys218, Cys204/Cys235, and Cys241/Cys267. A CUB 1 domain is found at 65–173 (CGGTLKGLNG…HGFKVYYEEL (109 aa)). N-linked (GlcNAc...) asparagine glycosylation is found at Asn73 and Asn90. The region spanning 176-237 (SSCGNPGVPP…WDFPVPICRA (62 aa)) is the Sushi 1 domain. Residues 241-345 (CGGTMRGSSG…RGFSAPYQGS (105 aa)) form the CUB 2 domain. The tract at residues 388–437 (HRLSEEQRVQVRSLSDSGLDPNTPEDQLSPHQADTQSTSRRPRNAEQIER) is disordered. The segment covering 411–426 (PEDQLSPHQADTQSTS) has biased composition (polar residues). One can recognise a Sushi 2 domain in the interval 484–545 (NLCPDPGEPE…WSDHRPVCKV (62 aa)). Cystine bridges form between Cys486/Cys526, Cys512/Cys543, Cys548/Cys574, Cys664/Cys704, Cys690/Cys717, and Cys721/Cys747. In terms of domain architecture, CUB 3 spans 548 to 659 (CGSNLQGPSG…VGFKVNYKEI (112 aa)). A Sushi 3 domain is found at 662–719 (ESCGDPGTPLYGIREGDGFSNRDVLRFECQFGFELIGEKSIVCQENNQWSANIPICIF). The CUB 4 domain occupies 721 to 829 (CLSNFTAPMG…RGFNITYNTF (109 aa)). N-linked (GlcNAc...) asparagine glycosylation is found at Asn724 and Asn823. Positions 832-893 (NECPDPGIPI…WSGPIPRCGA (62 aa)) constitute a Sushi 4 domain. Disulfide bonds link Cys834-Cys875, Cys860-Cys891, and Cys895-Cys921. Positions 895–1003 (CGGHFSAPSG…NGFKIHYESV (109 aa)) constitute a CUB 5 domain. Residue Asn966 is glycosylated (N-linked (GlcNAc...) asparagine). The Sushi 5 domain occupies 1008–1065 (YSCLDPGIPVHGRRYGHDFSIGSTVSFSCDPGYRLSHEEPLLCEKNHWWSHPLPTCDA). 3 disulfides stabilise this stretch: Cys1010–Cys1050, Cys1036–Cys1063, and Cys1067–Cys1093. A CUB 6 domain is found at 1067–1177 (CGGDVRGPSG…EGFNITFSEY (111 aa)). Residues Asn1092, Asn1126, and Asn1171 are each glycosylated (N-linked (GlcNAc...) asparagine). Residues 1180 to 1239 (EPCEDPGIPQYGSRVGFSFGVGDTLTFSCSLGYRLEGSSEIICLGGGRRVWSAPLPRCVA) form the Sushi 6 domain. 3 cysteine pairs are disulfide-bonded: Cys1182/Cys1222, Cys1208/Cys1237, and Cys1241/Cys1267. One can recognise a CUB 7 domain in the interval 1241–1349 (CGASATNNEG…EGFQLVYTSF (109 aa)). Residue Asn1280 is glycosylated (N-linked (GlcNAc...) asparagine). The region spanning 1352–1412 (SHCEDPGIPQ…WDYPLPSCIA (61 aa)) is the Sushi 7 domain. 12 disulfide bridges follow: Cys1354–Cys1395, Cys1381–Cys1410, Cys1414–Cys1441, Cys1528–Cys1568, Cys1554–Cys1584, Cys1588–Cys1614, Cys1701–Cys1741, Cys1727–Cys1758, Cys1762–Cys1788, Cys1878–Cys1918, Cys1904–Cys1935, and Cys1939–Cys1965. The 110-residue stretch at 1414-1523 (CGGRFKGESS…SGFAIQFSSS (110 aa)) folds into the CUB 8 domain. The Sushi 8 domain occupies 1526-1586 (TACRDPGVPM…WQPSPPVCIA (61 aa)). Asn1536 carries N-linked (GlcNAc...) asparagine glycosylation. The CUB 9 domain maps to 1588–1696 (CGGNLTGSSG…TGFHLEYKAK (109 aa)). N-linked (GlcNAc...) asparagine glycosylation is found at Asn1591 and Asn1709. Residues 1699-1760 (ESCFDPGNIM…WNRVLPSCHA (62 aa)) enclose the Sushi 9 domain. Residues 1762–1870 (CGSRSTGSEG…KGFHFVYQAV (109 aa)) form the CUB 10 domain. N-linked (GlcNAc...) asparagine glycosylation is present at Asn1781. The Sushi 10 domain maps to 1876 to 1937 (TQCSSVPEPR…WNDSLPTCIV (62 aa)). N-linked (GlcNAc...) asparagine glycosylation occurs at Asn1929. In terms of domain architecture, CUB 11 spans 1939–2047 (CGGILTKRKG…AGFHLEYTAI (109 aa)). N-linked (GlcNAc...) asparagine glycosylation occurs at Asn2019. A Sushi 11 domain is found at 2050-2109 (DSCPEPQTPSSGIKVGDRYMVGDVVSFQCDQGYSLQGHSHITCMPGPVRRWNYPIPICLA). Intrachain disulfides connect Cys2052–Cys2092, Cys2078–Cys2107, and Cys2111–Cys2137. The CUB 12 domain maps to 2111–2219 (CGGAMSDFSG…QGFHIVYQAY (109 aa)). Asn2155 carries an N-linked (GlcNAc...) asparagine glycan. The Sushi 12 domain maps to 2222–2281 (QSCPDPRPFRNGFVIGNDFTVGQTISFECFPGYTLIGNSALTCLHGVSRNWNHPLPRCEA). Cystine bridges form between Cys2224–Cys2264, Cys2250–Cys2279, Cys2283–Cys2309, Cys2395–Cys2437, Cys2423–Cys2452, Cys2456–Cys2484, Cys2569–Cys2610, Cys2596–Cys2627, Cys2632–Cys2674, Cys2658–Cys2689, Cys2694–Cys2739, Cys2725–Cys2754, Cys2759–Cys2799, Cys2785–Cys2812, Cys2817–Cys2857, Cys2843–Cys2870, Cys2875–Cys2915, Cys2901–Cys2928, Cys2933–Cys2977, Cys2963–Cys2990, Cys2995–Cys3035, Cys3021–Cys3048, Cys3056–Cys3096, Cys3082–Cys3109, Cys3114–Cys3155, Cys3141–Cys3168, Cys3173–Cys3215, Cys3199–Cys3228, Cys3233–Cys3273, Cys3259–Cys3286, Cys3291–Cys3331, Cys3317–Cys3344, Cys3352–Cys3393, Cys3379–Cys3406, Cys3411–Cys3453, and Cys3438–Cys3466. Residues 2283–2394 (CGGNITAMNG…LSYHAYQLRV (112 aa)) form the CUB 13 domain. N-linked (GlcNAc...) asparagine glycans are attached at residues Asn2286 and Asn2291. One can recognise a Sushi 13 domain in the interval 2393–2454 (RVCQPPPPVP…MDGAPPVCQV (62 aa)). The region spanning 2456–2567 (CPANELRLDS…KGFRIRYIAF (112 aa)) is the CUB 14 domain. 15 Sushi domains span residues 2567–2629 (FYCS…ACQA), 2630–2691 (ISCG…RCVV), 2692–2756 (VTCP…YCQI), 2757–2814 (ISCG…RCLA), 2815–2872 (GHCG…SCVP), 2873–2930 (VSCG…VCKV), 2931–2992 (VNCS…ECIM), 2993–3050 (IDCG…HCSG), 3054–3111 (GTCG…ECKA), 3112–3170 (VQCG…NCTI), 3171–3230 (ISCG…TCRA), 3231–3288 (VTCS…QCLP), 3289–3346 (KFCG…HCIE), 3350–3408 (TSCE…ECIP), and 3409–3468 (HSCK…VCEA). Over residues 3052 to 3065 (TTGTCGDPGTPGHG) the composition is skewed to low complexity. The tract at residues 3052–3071 (TTGTCGDPGTPGHGSRQESD) is disordered. A helical membrane pass occupies residues 3631–3651 (VAIAILVPFFALIFAGFGFYL). Residues 3652 to 3707 (YKQRTAPKTQYTGCSVHENNNGQAAFENPMYDTNAKSVEGKAVRFDPNLNTVCTMV) are Cytoplasmic-facing.

The protein belongs to the CSMD family. As to expression, expressed in the apical dendrites of postnatal hippocampal neurons (at protein level).

It is found in the cell membrane. Its function is as follows. Involved in dendrite development. The sequence is that of CUB and sushi domain-containing protein 3 (Csmd3) from Mus musculus (Mouse).